Reading from the N-terminus, the 247-residue chain is 1-(5-phosphoribosyl)-5-[(5-phosphoribosylamino)methylideneamino] imidazole-4-carboxamide isomerase (247 aa).

D8 serves as the catalytic Proton acceptor. Residue D130 is the Proton donor of the active site.

It belongs to the HisA/HisF family.

The protein localises to the cytoplasm. It catalyses the reaction 1-(5-phospho-beta-D-ribosyl)-5-[(5-phospho-beta-D-ribosylamino)methylideneamino]imidazole-4-carboxamide = 5-[(5-phospho-1-deoxy-D-ribulos-1-ylimino)methylamino]-1-(5-phospho-beta-D-ribosyl)imidazole-4-carboxamide. It functions in the pathway amino-acid biosynthesis; L-histidine biosynthesis; L-histidine from 5-phospho-alpha-D-ribose 1-diphosphate: step 4/9. This Stutzerimonas stutzeri (strain A1501) (Pseudomonas stutzeri) protein is 1-(5-phosphoribosyl)-5-[(5-phosphoribosylamino)methylideneamino] imidazole-4-carboxamide isomerase.